The primary structure comprises 478 residues: 3-isopropylmalate dehydratase large subunit (478 aa).

[4Fe-4S] cluster-binding residues include C359, C417, and C420.

The protein belongs to the aconitase/IPM isomerase family. LeuC type 1 subfamily. Heterodimer of LeuC and LeuD. [4Fe-4S] cluster serves as cofactor.

The catalysed reaction is (2R,3S)-3-isopropylmalate = (2S)-2-isopropylmalate. It functions in the pathway amino-acid biosynthesis; L-leucine biosynthesis; L-leucine from 3-methyl-2-oxobutanoate: step 2/4. Catalyzes the isomerization between 2-isopropylmalate and 3-isopropylmalate, via the formation of 2-isopropylmaleate. This chain is 3-isopropylmalate dehydratase large subunit, found in Anaeromyxobacter sp. (strain Fw109-5).